The chain runs to 389 residues: Methylthioribose-1-phosphate isomerase (389 aa).

The active-site Proton donor is Asp258.

The protein belongs to the eIF-2B alpha/beta/delta subunits family. MtnA subfamily.

It is found in the cytoplasm. The protein resides in the nucleus. The catalysed reaction is 5-(methylsulfanyl)-alpha-D-ribose 1-phosphate = 5-(methylsulfanyl)-D-ribulose 1-phosphate. It participates in amino-acid biosynthesis; L-methionine biosynthesis via salvage pathway; L-methionine from S-methyl-5-thio-alpha-D-ribose 1-phosphate: step 1/6. Its function is as follows. Catalyzes the interconversion of methylthioribose-1-phosphate (MTR-1-P) into methylthioribulose-1-phosphate (MTRu-1-P). This is Methylthioribose-1-phosphate isomerase from Chaetomium globosum (strain ATCC 6205 / CBS 148.51 / DSM 1962 / NBRC 6347 / NRRL 1970) (Soil fungus).